The primary structure comprises 74 residues: Serine rich endogenous peptide 23 (74 aa).

The first 25 residues, 1-25 (MNKVVVYVLALSILLFFGLPNTTLA), serve as a signal peptide directing secretion. An SCOOP motif motif is present at residues 52–66 (KIAVGGSDSVRAHSK). The SxS motif essential for MIK2 binding motif lies at 58–60 (SDS).

The protein belongs to the serine rich endogenous peptide (SCOOP) phytocytokine family. As to quaternary structure, interacts with MIK2 (via extracellular leucine-rich repeat domain); this interaction triggers the formation of complex between MIK2 and the BAK1/SERK3 and SERK4 coreceptors, and subsequent BAK1 activation by phosphorylation. Mostly expressed in roots, and, to a lower extent, in seedlings shoots.

It is found in the cell membrane. It localises to the secreted. The protein resides in the extracellular space. Its subcellular location is the apoplast. Functionally, brassicaceae-specific phytocytokine (plant endogenous peptide released into the apoplast) perceived by MIK2 in a BAK1/SERK3 and SERK4 coreceptors-dependent manner, that modulates various physiological and antimicrobial processes including growth prevention and reactive oxygen species (ROS) response regulation. Inhibits root growth. The polypeptide is Serine rich endogenous peptide 23 (Arabidopsis thaliana (Mouse-ear cress)).